Consider the following 815-residue polypeptide: Lon protease 1 (815 aa).

The Lon N-terminal domain maps to 14-211 (IAILPLLGTV…KLNEVLTREL (198 aa)). 370 to 377 (GPPGVGKT) is a binding site for ATP. Positions 606–787 (TDRPGIVTGL…GQVIELALRA (182 aa)) constitute a Lon proteolytic domain. Catalysis depends on residues S693 and K736.

It belongs to the peptidase S16 family. In terms of assembly, homohexamer. Organized in a ring with a central cavity.

Its subcellular location is the cytoplasm. It carries out the reaction Hydrolysis of proteins in presence of ATP.. ATP-dependent serine protease that mediates the selective degradation of mutant and abnormal proteins as well as certain short-lived regulatory proteins. Required for cellular homeostasis and for survival from DNA damage and developmental changes induced by stress. Degrades polypeptides processively to yield small peptide fragments that are 5 to 10 amino acids long. Binds to DNA in a double-stranded, site-specific manner. The protein is Lon protease 1 of Herpetosiphon aurantiacus (strain ATCC 23779 / DSM 785 / 114-95).